The following is a 210-amino-acid chain: uncharacterized protein (210 aa).

Residues Met-1 to Ala-21 form the signal peptide.

This is an uncharacterized protein from Archaeoglobus fulgidus (strain ATCC 49558 / DSM 4304 / JCM 9628 / NBRC 100126 / VC-16).